The primary structure comprises 291 residues: Neugrin (291 aa).

The N-terminal stretch at 1-15 (MAVTLSLLLGGRVCA) is a signal peptide. 2 disordered regions span residues 26 to 48 (GVAGPGPIGREPDPDSDWEPEER) and 155 to 270 (GSGN…DNFS). Serine 41 carries the post-translational modification Phosphoserine. 2 N-linked (GlcNAc...) asparagine glycosylation sites follow: asparagine 158 and asparagine 186. Positions 236 to 246 (KYSSDSESPRG) are enriched in polar residues. The N-linked (GlcNAc...) asparagine glycan is linked to asparagine 268.

It belongs to the neugrin family. As to quaternary structure, forms a regulatory protein-RNA complex, consisting of RCC1L, NGRN, RPUSD3, RPUSD4, TRUB2, FASTKD2 and 16S mt-rRNA. Interacts with 16S mt-rRNA; this interaction is direct. In terms of tissue distribution, expressed at high levels in heart, brain and skeletal muscle. In brain, mainly expressed in neurons rather than glial cells.

The protein localises to the nucleus. The protein resides in the secreted. It is found in the mitochondrion membrane. Its function is as follows. Plays an essential role in mitochondrial ribosome biogenesis. As a component of a functional protein-RNA module, consisting of RCC1L, NGRN, RPUSD3, RPUSD4, TRUB2, FASTKD2 and 16S mitochondrial ribosomal RNA (16S mt-rRNA), controls 16S mt-rRNA abundance and is required for intra-mitochondrial translation of core subunits of the oxidative phosphorylation system. In Homo sapiens (Human), this protein is Neugrin.